Here is a 471-residue protein sequence, read N- to C-terminus: N-succinylglutamate 5-semialdehyde dehydrogenase (471 aa).

207–212 (GSAHAG) is a binding site for NAD(+). Active-site residues include Glu-230 and Cys-264.

This sequence belongs to the aldehyde dehydrogenase family. AstD subfamily.

The enzyme catalyses N-succinyl-L-glutamate 5-semialdehyde + NAD(+) + H2O = N-succinyl-L-glutamate + NADH + 2 H(+). It participates in amino-acid degradation; L-arginine degradation via AST pathway; L-glutamate and succinate from L-arginine: step 4/5. Catalyzes the NAD-dependent reduction of succinylglutamate semialdehyde into succinylglutamate. In Novosphingobium aromaticivorans (strain ATCC 700278 / DSM 12444 / CCUG 56034 / CIP 105152 / NBRC 16084 / F199), this protein is N-succinylglutamate 5-semialdehyde dehydrogenase.